The chain runs to 306 residues: MWFKNLLIYRLTQDLPVDAEALETALATKLARPCASQELTTYGFVAPFGKGEDAPLVHVSGDFLLISARKEERILPGSVVRDAVKEKVEEIEAEQMRKVYKKERDQIKDEIIQAFLPRAFIRRSSTFAAIAPKQGLILVNSASPKRAEDLLSTLREVIGTLPVRPLTVKTAPTAVMTEWVTTQQAAPDFFVLDECELRDTHEDGGIVRCKRQDLTSEEIQLHLSTGKVVTQLSLAWQDKLSFMLDDKMTVKRLKFEDLLQDQAEQDGGDEALGQLDASFTLMMLTFGDFLPALVEALGGEETPQGI.

The protein belongs to the RdgC family.

It localises to the cytoplasm. Its subcellular location is the nucleoid. In terms of biological role, may be involved in recombination. The protein is Recombination-associated protein RdgC of Pseudomonas fluorescens (strain Pf0-1).